A 547-amino-acid polypeptide reads, in one-letter code: Glucose-6-phosphate isomerase (547 aa).

The Proton donor role is filled by Glu351. Catalysis depends on residues His382 and Lys509.

Belongs to the GPI family.

It localises to the cytoplasm. It carries out the reaction alpha-D-glucose 6-phosphate = beta-D-fructose 6-phosphate. It participates in carbohydrate biosynthesis; gluconeogenesis. It functions in the pathway carbohydrate degradation; glycolysis; D-glyceraldehyde 3-phosphate and glycerone phosphate from D-glucose: step 2/4. Catalyzes the reversible isomerization of glucose-6-phosphate to fructose-6-phosphate. The protein is Glucose-6-phosphate isomerase of Coxiella burnetii (strain CbuG_Q212) (Coxiella burnetii (strain Q212)).